A 76-amino-acid polypeptide reads, in one-letter code: Acyl carrier protein (76 aa).

The 76-residue stretch at 1 to 76 (MSLEEKVKNI…DVIEYIKAHT (76 aa)) folds into the Carrier domain. Serine 36 is subject to O-(pantetheine 4'-phosphoryl)serine.

The protein belongs to the acyl carrier protein (ACP) family. Post-translationally, 4'-phosphopantetheine is transferred from CoA to a specific serine of apo-ACP by AcpS. This modification is essential for activity because fatty acids are bound in thioester linkage to the sulfhydryl of the prosthetic group.

The protein localises to the cytoplasm. Its pathway is lipid metabolism; fatty acid biosynthesis. In terms of biological role, carrier of the growing fatty acid chain in fatty acid biosynthesis. The polypeptide is Acyl carrier protein (Desulfatibacillum aliphaticivorans).